The primary structure comprises 185 residues: Ribosome hibernation promotion factor (185 aa).

The segment at 1 to 125 (MIKFNIRGEN…PLDTTDEVAE (125 aa)) is probably still associates with ribosome. A required but not sufficient to restore ribosome dimerization, in vitro will replace E.coli RMF in ribosome dimerization region spans residues 126–185 (DHVDIVRTKHVALKPMDAEEAVLQMDMLGHDFYVFTDADSNGTHVVYRRTDGRYGLIETE).

The protein belongs to the HPF/YfiA ribosome-associated protein family. Long HPF subfamily. In terms of assembly, interacts with 100S ribosomes in stationary phase; alters the relative position of the 30S and 50S subunits.

It localises to the cytoplasm. Its function is as follows. Required for dimerization of active 70S ribosomes into 100S ribosomes in stationary phase; 100S ribosomes are translationally inactive and sometimes present during exponential growth. Able to dimerize E.coli 70S ribosomes in vitro. This is Ribosome hibernation promotion factor from Lactococcus lactis subsp. cremoris (strain MG1363).